Consider the following 346-residue polypeptide: Tetraacyldisaccharide 4'-kinase (346 aa).

Residue 54–61 (TVGGAGKT) coordinates ATP.

This sequence belongs to the LpxK family.

It carries out the reaction a lipid A disaccharide + ATP = a lipid IVA + ADP + H(+). It participates in glycolipid biosynthesis; lipid IV(A) biosynthesis; lipid IV(A) from (3R)-3-hydroxytetradecanoyl-[acyl-carrier-protein] and UDP-N-acetyl-alpha-D-glucosamine: step 6/6. Its function is as follows. Transfers the gamma-phosphate of ATP to the 4'-position of a tetraacyldisaccharide 1-phosphate intermediate (termed DS-1-P) to form tetraacyldisaccharide 1,4'-bis-phosphate (lipid IVA). This is Tetraacyldisaccharide 4'-kinase from Rhizobium etli (strain ATCC 51251 / DSM 11541 / JCM 21823 / NBRC 15573 / CFN 42).